The chain runs to 188 residues: Diphosphoinositol polyphosphate phosphohydrolase DDP1 (188 aa).

The segment covering 1-21 (MGKTADNHGPVRSETAREGRE) has biased composition (basic and acidic residues). The interval 1-23 (MGKTADNHGPVRSETAREGRENQ) is disordered. The region spanning 30–179 (GARLVAGCIC…KRPELLEALN (150 aa)) is the Nudix hydrolase domain. 1D-myo-inositol hexakisphosphate contacts are provided by arginine 32, serine 52, serine 53, and lysine 63. Residues arginine 32, serine 52, serine 53, and lysine 63 each contribute to the 5-diphospho-1D-myo-inositol 1,2,3,4,6-pentakisphosphate site. Residues arginine 32, serine 52, serine 53, and lysine 63 each contribute to the P(1),P(5)-bis(5'-adenosyl) pentaphosphate site. Mg(2+)-binding residues include lysine 63, glutamate 80, and glutamate 84. A Nudix box motif is present at residues 65–86 (GVEKDEPNYETTAQRETWEEAG). Residue aspartate 100 participates in P(1),P(5)-bis(5'-adenosyl) pentaphosphate binding. Residues arginine 102, arginine 129, arginine 152, and arginine 171 each contribute to the 1D-myo-inositol hexakisphosphate site. Arginine 102 is a 5-diphospho-1D-myo-inositol 1,2,3,4,6-pentakisphosphate binding site. 2 residues coordinate 5-diphospho-1D-myo-inositol 1,2,3,4,6-pentakisphosphate: arginine 152 and arginine 171. Positions 152, 171, and 173 each coordinate P(1),P(5)-bis(5'-adenosyl) pentaphosphate.

The protein belongs to the Nudix hydrolase family. DIPP subfamily. Mg(2+) serves as cofactor. The cofactor is Mn(2+). It depends on Zn(2+) as a cofactor.

The protein resides in the cytoplasm. It localises to the nucleus. It carries out the reaction diphospho-myo-inositol polyphosphate + H2O = myo-inositol polyphosphate + phosphate.. It catalyses the reaction P(1),P(6)-bis(5'-adenosyl) hexaphosphate + H2O = adenosine 5'-pentaphosphate + AMP + 2 H(+). The enzyme catalyses P(1),P(5)-bis(5'-adenosyl) pentaphosphate + H2O = adenosine 5'-tetraphosphate + AMP + 2 H(+). The catalysed reaction is [phosphate](n+1) + n H2O = (n+1) phosphate + n H(+). In terms of biological role, may eliminate potentially toxic dinucleoside polyphosphates during sporulation. Most active against diadenosine 5',5'''-P1,P6-hexaphosphate (Ap6A). Can also hydrolyze diadenosine 5',5'''-P1,P5-pentaphosphate (Ap5A), adenosine 5'-pentaphosphate (p5A), and adenosine 5'-tetraphosphate (p4A) are also substrates, but not diadenosine 5',5'''-P1,P4-tetraphosphate (Ap4A) or other dinucleotides, mononucleotides, nucleotide sugars, or nucleotide alcohols. Also cleaves a beta-phosphate from the diphosphate groups in PP-InsP5 (diphosphoinositol pentakisphosphate) and [PP]2-InsP4 (bisdiphosphoinositol tetrakisphosphate). Also has endopolyphosphatase activity. This is Diphosphoinositol polyphosphate phosphohydrolase DDP1 (DDP1) from Saccharomyces cerevisiae (strain ATCC 204508 / S288c) (Baker's yeast).